Here is a 182-residue protein sequence, read N- to C-terminus: MGNVFANLFKGLFGKKEMRILMVGLDAAGKTTILYKLKLGEIVTTIPTIGFNVETVEYKNISFTVWDVGGQDKIRPLWRHYFQNTQGLIFVVDSNDRERIGEAREELMRMLAEDELRDAVLLIFANKQDLPNAMNAAEITDKLGLHSLRNRNWYIQATCATSGDGLYEGLDWLSNQLKNANR.

Gly-2 carries N-myristoyl glycine lipidation. An important for the stable binding to the membranes region spans residues 3–16 (NVFANLFKGLFGKK). Residues 24-32 (GLDAAGKTT), 126-129 (NKQD), and Ala-160 each bind GTP.

Belongs to the small GTPase superfamily. Arf family.

It localises to the golgi apparatus membrane. The protein localises to the cytoplasm. Its subcellular location is the cytosol. The enzyme catalyses GTP + H2O = GDP + phosphate + H(+). With respect to regulation, alternates between an inactive GDP-bound form and an active GTP-bound form. Activated by a guanine nucleotide-exchange factor (GEF) and inactivated by GTPase-activating protein (GAP). In terms of biological role, small GTPase involved in protein trafficking between different compartments. Modulates vesicle budding and uncoating within the Golgi complex. In its GTP-bound form, triggers the recruitment of coatomer proteins to the Golgi membrane. The hydrolysis of ARF1-bound GTP, which is mediated by ARFGAPs proteins, is required for dissociation of coat proteins from Golgi membranes and vesicles. Has a role in eye development. Required for cleavage furrow ingression in embryonic cells. This chain is ADP-ribosylation factor 1, found in Drosophila melanogaster (Fruit fly).